A 58-amino-acid chain; its full sequence is UPF0391 membrane protein Shew185_1413 (58 aa).

The next 2 membrane-spanning stretches (helical) occupy residues 6 to 26 (LVFLVVAVIAGLFGFTGIAGA) and 28 to 48 (AGIAKIIFFLFIVLLVISLLI).

This sequence belongs to the UPF0391 family.

Its subcellular location is the cell membrane. The sequence is that of UPF0391 membrane protein Shew185_1413 from Shewanella baltica (strain OS185).